We begin with the raw amino-acid sequence, 95 residues long: Putative pterin-4-alpha-carbinolamine dehydratase (95 aa).

This sequence belongs to the pterin-4-alpha-carbinolamine dehydratase family.

The enzyme catalyses (4aS,6R)-4a-hydroxy-L-erythro-5,6,7,8-tetrahydrobiopterin = (6R)-L-erythro-6,7-dihydrobiopterin + H2O. The polypeptide is Putative pterin-4-alpha-carbinolamine dehydratase (Solibacter usitatus (strain Ellin6076)).